We begin with the raw amino-acid sequence, 134 residues long: Protein LctB (134 aa).

This Bacillus caldotenax protein is Protein LctB (lctB).